The following is a 311-amino-acid chain: MSIQDLRDVKIITAMITPFKEDGSINFEVLPELIEHLLSHHTEGILLAGTTAESPTLTHEEELELFGAVQKIVNGRVPLIAGIGTNDTRDSIEFAKEVAAFGGFAAGLAIVPYYNKPSQEGMYQHFKAIADASDLPIIIYNIPGRVVVEMTPETMLRLAEHPNIIGVKECTSLANMAYLIEHKPEDFLIYTGEDGDAFHAMNLGADGVISVASHTNGDEMYEMFTAIEQQDIRTAAAIQRKFIPKVNALFSYPSPAPVKAVLNYLGFEVGPLRLPLVPCPEEDAKRIIKVVVDGDYEATKATVTGVVRPDY.

T51 is a pyruvate binding site. Y140 serves as the catalytic Proton donor/acceptor. The active-site Schiff-base intermediate with substrate is the K168. I209 serves as a coordination point for pyruvate.

This sequence belongs to the DapA family. As to quaternary structure, homotetramer; dimer of dimers.

Its subcellular location is the cytoplasm. It carries out the reaction L-aspartate 4-semialdehyde + pyruvate = (2S,4S)-4-hydroxy-2,3,4,5-tetrahydrodipicolinate + H2O + H(+). The protein operates within amino-acid biosynthesis; L-lysine biosynthesis via DAP pathway; (S)-tetrahydrodipicolinate from L-aspartate: step 3/4. Catalyzes the condensation of (S)-aspartate-beta-semialdehyde [(S)-ASA] and pyruvate to 4-hydroxy-tetrahydrodipicolinate (HTPA). This is 4-hydroxy-tetrahydrodipicolinate synthase from Streptococcus suis (strain 98HAH33).